Here is a 352-residue protein sequence, read N- to C-terminus: Protein O-mannose kinase (352 aa).

The Cytoplasmic portion of the chain corresponds to 1–16 (MERKPSVCRKSGSWNC). A helical; Signal-anchor for type II membrane protein membrane pass occupies residues 17–37 (LLVLFLLLLFTVVSVNFLLYM). Residues 38-352 (YIDQMYAPSR…MAVAETREML (315 aa)) are Lumenal-facing. Residues 82–352 (VRKLKLVGEG…MAVAETREML (271 aa)) form the Protein kinase domain.

Belongs to the protein kinase superfamily. Ser/Thr protein kinase family. STKL subfamily.

Its subcellular location is the endoplasmic reticulum membrane. The catalysed reaction is 3-O-[beta-D-GalNAc-(1-&gt;3)-beta-D-GlcNAc-(1-&gt;4)-alpha-D-Man]-L-Thr-[protein] + ATP = 3-O-[beta-D-GalNAc-(1-&gt;3)-beta-D-GlcNAc-(1-&gt;4)-(O-6-P-alpha-D-Man)]-Thr-[protein] + ADP + H(+). Functionally, protein O-mannose kinase that specifically mediates phosphorylation at the 6-position of an O-mannose of the trisaccharide (N-acetylgalactosamine (GalNAc)-beta-1,3-N-acetylglucosamine (GlcNAc)-beta-1,4-mannose) to generate phosphorylated O-mannosyl trisaccharide (N-acetylgalactosamine-beta-1,3-N-acetylglucosamine-beta-1,4-(phosphate-6-)mannose). Phosphorylated O-mannosyl trisaccharide is a carbohydrate structure present in alpha-dystroglycan (dag1), which is required for binding laminin G-like domain-containing extracellular proteins with high affinity. Only shows kinase activity when the GalNAc-beta-3-GlcNAc-beta-terminus is linked to the 4-position of O-mannose, suggesting that this disaccharide serves as the substrate recognition motif. This Xenopus laevis (African clawed frog) protein is Protein O-mannose kinase (pomk).